The sequence spans 544 residues: Chaperonin GroEL (544 aa).

ATP contacts are provided by residues 29 to 32 (TLGP), 86 to 90 (DGTTT), Gly413, 476 to 478 (NAA), and Asp492.

The protein belongs to the chaperonin (HSP60) family. In terms of assembly, forms a cylinder of 14 subunits composed of two heptameric rings stacked back-to-back. Interacts with the co-chaperonin GroES.

Its subcellular location is the cytoplasm. The enzyme catalyses ATP + H2O + a folded polypeptide = ADP + phosphate + an unfolded polypeptide.. Functionally, together with its co-chaperonin GroES, plays an essential role in assisting protein folding. The GroEL-GroES system forms a nano-cage that allows encapsulation of the non-native substrate proteins and provides a physical environment optimized to promote and accelerate protein folding. This Bacillus thuringiensis (strain Al Hakam) protein is Chaperonin GroEL.